A 423-amino-acid polypeptide reads, in one-letter code: Adenylosuccinate synthetase (423 aa).

GTP is bound by residues 12 to 18 and 40 to 42; these read GDEGKGK and GHT. The active-site Proton acceptor is Asp-13. Positions 13 and 40 each coordinate Mg(2+). Residues 13–16, 38–41, Thr-129, Arg-143, Gln-221, Thr-236, and Arg-300 each bind IMP; these read DEGK and NAGH. His-41 functions as the Proton donor in the catalytic mechanism. 296 to 302 is a binding site for substrate; sequence SVTGRKR. GTP is bound by residues Arg-302 and 408–410; that span reads SVG.

The protein belongs to the adenylosuccinate synthetase family. In terms of assembly, homodimer. Mg(2+) serves as cofactor.

The protein localises to the cytoplasm. The catalysed reaction is IMP + L-aspartate + GTP = N(6)-(1,2-dicarboxyethyl)-AMP + GDP + phosphate + 2 H(+). It functions in the pathway purine metabolism; AMP biosynthesis via de novo pathway; AMP from IMP: step 1/2. In terms of biological role, plays an important role in the de novo pathway of purine nucleotide biosynthesis. Catalyzes the first committed step in the biosynthesis of AMP from IMP. The polypeptide is Adenylosuccinate synthetase (Bacteroides thetaiotaomicron (strain ATCC 29148 / DSM 2079 / JCM 5827 / CCUG 10774 / NCTC 10582 / VPI-5482 / E50)).